Consider the following 478-residue polypeptide: Zinc finger protein 410 (478 aa).

Disordered stretches follow at residues 84-113 (PDGEETRAQTVQKSPEFLTTPESPSLLQDL) and 187-214 (NAKTGSNGENVHLGSGDGQPKDSGPLPQ). Polar residues predominate over residues 103 to 113 (TPESPSLLQDL). 5 C2H2-type zinc fingers span residues 219–243 (LKCTVEGCDRTFVWPAHFKYHLKTH), 249–273 (FICPAEGCGKSFYVLQRLKVHMRTH), 279–303 (FMCHESGCGKQFTTAGNLKNHRRIH), 309–333 (FLCEAQGCGRSFAEYSSLRKHLVVH), and 339–362 (HQCQVCGKTFSQSGSRNVHMRKHH). Zn(2+)-binding residues include cysteine 221, cysteine 226, histidine 239, histidine 243, cysteine 251, cysteine 256, histidine 269, histidine 273, cysteine 281, cysteine 286, histidine 299, histidine 303, cysteine 311, cysteine 316, histidine 329, histidine 333, cysteine 341, cysteine 344, histidine 357, and histidine 361.

As to quaternary structure, interacts with CDKN2A/p14ARF. O-glycosylated. O-GlcNAcylation may occur in response to increasing glucose levels and affect transcription factor activity. Post-translationally, sumoylated. Sumoylation increases its half-life, possibly by blocking ubiquitin-mediated degradation.

The protein resides in the nucleus. Its subcellular location is the chromosome. Its function is as follows. Transcription factor that binds to the sequence motif 5'-CATCCCATAATA-3', and is specifically required to silence expression of fetal hemoglobin in adult erythroid cells. Prevents expression of fetal hemoglobin genes HBG1 and HBG2 through CHD4: acts as a direct transcriptional activator of CHD4, a central component of the NuRD complex that represses transcription of fetal hemoglobin genes HBG1 and HBG2 in erythroid cells. May also activate transcription of matrix-remodeling genes such as MMP1 during fibroblast senescence. May activate transcription of the gap junction gene GJC1, perhaps in response to increasing glucose. However, recent studies suggest that ZNF410 is dedicated to regulate expression of a single gene: CHD4. The chain is Zinc finger protein 410 from Mus musculus (Mouse).